We begin with the raw amino-acid sequence, 178 residues long: ATP synthase subunit delta (178 aa).

Belongs to the ATPase delta chain family. As to quaternary structure, F-type ATPases have 2 components, F(1) - the catalytic core - and F(0) - the membrane proton channel. F(1) has five subunits: alpha(3), beta(3), gamma(1), delta(1), epsilon(1). F(0) has three main subunits: a(1), b(2) and c(10-14). The alpha and beta chains form an alternating ring which encloses part of the gamma chain. F(1) is attached to F(0) by a central stalk formed by the gamma and epsilon chains, while a peripheral stalk is formed by the delta and b chains.

The protein localises to the cell inner membrane. Its function is as follows. F(1)F(0) ATP synthase produces ATP from ADP in the presence of a proton or sodium gradient. F-type ATPases consist of two structural domains, F(1) containing the extramembraneous catalytic core and F(0) containing the membrane proton channel, linked together by a central stalk and a peripheral stalk. During catalysis, ATP synthesis in the catalytic domain of F(1) is coupled via a rotary mechanism of the central stalk subunits to proton translocation. This protein is part of the stalk that links CF(0) to CF(1). It either transmits conformational changes from CF(0) to CF(1) or is implicated in proton conduction. In Hahella chejuensis (strain KCTC 2396), this protein is ATP synthase subunit delta.